Here is a 288-residue protein sequence, read N- to C-terminus: Elongation factor Ts (288 aa).

The tract at residues 82–85 (TDFV) is involved in Mg(2+) ion dislocation from EF-Tu.

This sequence belongs to the EF-Ts family.

It is found in the cytoplasm. Functionally, associates with the EF-Tu.GDP complex and induces the exchange of GDP to GTP. It remains bound to the aminoacyl-tRNA.EF-Tu.GTP complex up to the GTP hydrolysis stage on the ribosome. The sequence is that of Elongation factor Ts from Chlorobaculum parvum (strain DSM 263 / NCIMB 8327) (Chlorobium vibrioforme subsp. thiosulfatophilum).